Consider the following 256-residue polypeptide: MNFTVIIPARYASSRLPGKPLADIAGKPMIQHVWEKAQQSGATRVVVATDYEEVARAVRGFDGEVCMTSSQHNSGTERLAEVIEKLAVPDDEIIVNIQGDEPLIPPVIVSQVAQNLQKYQVNMATLAVKIEDVEELFNPNVVKVLTDKDGYVLYFSRAVIPWDRDQFVQLGKADLSQLQLHQHYFRHIGIYAYRAGFIKQYVQWQPTTLEQIERLEQLRVLWNGERIHVELAKQAPAVGVDTVEDLEKVRSILSHV.

The protein belongs to the KdsB family.

Its subcellular location is the cytoplasm. The enzyme catalyses 3-deoxy-alpha-D-manno-oct-2-ulosonate + CTP = CMP-3-deoxy-beta-D-manno-octulosonate + diphosphate. The protein operates within nucleotide-sugar biosynthesis; CMP-3-deoxy-D-manno-octulosonate biosynthesis; CMP-3-deoxy-D-manno-octulosonate from 3-deoxy-D-manno-octulosonate and CTP: step 1/1. Its pathway is bacterial outer membrane biogenesis; lipopolysaccharide biosynthesis. Its function is as follows. Activates KDO (a required 8-carbon sugar) for incorporation into bacterial lipopolysaccharide in Gram-negative bacteria. The chain is 3-deoxy-manno-octulosonate cytidylyltransferase from Histophilus somni (strain 2336) (Haemophilus somnus).